A 72-amino-acid chain; its full sequence is UPF0270 protein ETA_31870 (72 aa).

This sequence belongs to the UPF0270 family.

The protein is UPF0270 protein ETA_31870 of Erwinia tasmaniensis (strain DSM 17950 / CFBP 7177 / CIP 109463 / NCPPB 4357 / Et1/99).